Here is a 572-residue protein sequence, read N- to C-terminus: Phenylalanine--tRNA ligase beta subunit (572 aa).

The B5 domain occupies 285-363; the sequence is LSTTTKTVSH…RAFGFNELEP (79 aa). Mg(2+)-binding residues include Asp341, Asp347, Asp350, and Asp351.

This sequence belongs to the phenylalanyl-tRNA synthetase beta subunit family. Type 2 subfamily. Tetramer of two alpha and two beta subunits. Mg(2+) is required as a cofactor.

The protein resides in the cytoplasm. The enzyme catalyses tRNA(Phe) + L-phenylalanine + ATP = L-phenylalanyl-tRNA(Phe) + AMP + diphosphate + H(+). This chain is Phenylalanine--tRNA ligase beta subunit, found in Natronomonas pharaonis (strain ATCC 35678 / DSM 2160 / CIP 103997 / JCM 8858 / NBRC 14720 / NCIMB 2260 / Gabara) (Halobacterium pharaonis).